Reading from the N-terminus, the 90-residue chain is Small ribosomal subunit protein bS16 (90 aa).

Belongs to the bacterial ribosomal protein bS16 family.

This Anoxybacillus flavithermus (strain DSM 21510 / WK1) protein is Small ribosomal subunit protein bS16.